We begin with the raw amino-acid sequence, 972 residues long: UPF0746 protein DDB_G0280785 (972 aa).

The segment covering 1-19 has biased composition (basic and acidic residues); that stretch reads MISNKRKEIENINRHHEKD. The interval 1–30 is disordered; it reads MISNKRKEIENINRHHEKDNDDDDSDGIDN. One can recognise an SAP domain in the interval 44 to 78; that stretch reads SGSTNYRELQIIAKSLGLASNGKKQLVYNRIEGYF.

This sequence belongs to the UPF0746 family.

The chain is UPF0746 protein DDB_G0280785 from Dictyostelium discoideum (Social amoeba).